Here is a 187-residue protein sequence, read N- to C-terminus: ECF RNA polymerase sigma factor SigK (187 aa).

Residues 30 to 96 are sigma-70 factor domain-2; that stretch reads YDHTKSRVYG…RAVDRVRCEQ (67 aa). The short motif at 53–56 is the Interaction with polymerase core subunit RpoC element; it reads ETTQ. The interval 133-182 is sigma-70 factor domain-4; the sequence is CLKALTDTQRQCIELAYYGGLTYVEVSRRLAANLSTIKSRMRDALRSLRN. Positions 155–174 form a DNA-binding region, H-T-H motif; the sequence is YVEVSRRLAANLSTIKSRMR.

This sequence belongs to the sigma-70 factor family. ECF subfamily. In terms of assembly, interacts transiently with the RNA polymerase catalytic core formed by RpoA, RpoB, RpoC and RpoZ (2 alpha, 1 beta, 1 beta' and 1 omega subunit) to form the RNA polymerase holoenzyme that can initiate transcription. Interacts (via sigma-70 factor domain 4) with anti-sigma-K factor RskA.

In terms of biological role, sigma factors are initiation factors that promote the attachment of RNA polymerase to specific initiation sites and are then released. Extracytoplasmic function (ECF) sigma factors are held in an inactive form by an anti-sigma factor until released by regulated intramembrane proteolysis. This Mycobacterium tuberculosis (strain ATCC 25177 / H37Ra) protein is ECF RNA polymerase sigma factor SigK (sigK).